A 360-amino-acid polypeptide reads, in one-letter code: sn-glycerol-3-phosphate import ATP-binding protein UgpC (360 aa).

One can recognise an ABC transporter domain in the interval 4–235 (LSLKGVRKSY…PATTFVASFI (232 aa)). 37 to 44 (GPSGCGKS) serves as a coordination point for ATP.

It belongs to the ABC transporter superfamily. sn-glycerol-3-phosphate importer (TC 3.A.1.1.3) family. The complex is composed of two ATP-binding proteins (UgpC), two transmembrane proteins (UgpA and UgpE) and a solute-binding protein (UgpB).

It localises to the cell inner membrane. It carries out the reaction sn-glycerol 3-phosphate(out) + ATP + H2O = sn-glycerol 3-phosphate(in) + ADP + phosphate + H(+). In terms of biological role, part of the ABC transporter complex UgpBAEC involved in sn-glycerol-3-phosphate (G3P) import. Responsible for energy coupling to the transport system. The sequence is that of sn-glycerol-3-phosphate import ATP-binding protein UgpC from Burkholderia pseudomallei (strain 1710b).